The following is a 458-amino-acid chain: Carboxypeptidase N catalytic chain (458 aa).

An N-terminal signal peptide occupies residues 1–20 (MSDLLSVFLHLLLLFKLVAP). In terms of domain architecture, Peptidase M14 spans 24–338 (RHHRYDDLVR…EALIQFLEQV (315 aa)). Cysteine 42 and cysteine 104 are disulfide-bonded. Residues histidine 86, glutamate 89, and histidine 216 each coordinate Zn(2+). A disulfide bond links cysteine 271 and cysteine 311. The active-site Proton donor/acceptor is the glutamate 308. 3 O-linked (GalNAc...) threonine glycosylation sites follow: threonine 400, threonine 402, and threonine 409. The tract at residues 423–458 (SPVRRAPSRRHGVRAKVQPQARKKEMEMRQLQRGPA) is disordered.

This sequence belongs to the peptidase M14 family. Tetramer of two catalytic chains and two glycosylated inactive chains. Requires Zn(2+) as cofactor. In terms of tissue distribution, synthesized in the liver and secreted in plasma.

It localises to the secreted. Its subcellular location is the extracellular space. It catalyses the reaction Release of a C-terminal basic amino acid, preferentially lysine.. In terms of biological role, protects the body from potent vasoactive and inflammatory peptides containing C-terminal Arg or Lys (such as kinins or anaphylatoxins) which are released into the circulation. This Homo sapiens (Human) protein is Carboxypeptidase N catalytic chain (CPN1).